The chain runs to 416 residues: Probable tRNA pseudouridine synthase D (416 aa).

Catalysis depends on Asp83, which acts as the Nucleophile. Residues 158–379 (GFPNYFGYQR…PGGRRELLIR (222 aa)) enclose the TRUD domain.

The protein belongs to the pseudouridine synthase TruD family.

It carries out the reaction uridine(13) in tRNA = pseudouridine(13) in tRNA. Functionally, could be responsible for synthesis of pseudouridine from uracil-13 in transfer RNAs. This is Probable tRNA pseudouridine synthase D from Thermococcus onnurineus (strain NA1).